The following is a 61-amino-acid chain: Photosystem II reaction center protein K (61 aa).

Positions 1–24 are excised as a propeptide; sequence MLNIFCLICICLNSTLYSSSFFFA. The helical transmembrane segment at 32–52 threads the bilayer; it reads FFNPIIDVMPIIPVLFFLLAF.

Belongs to the PsbK family. In terms of assembly, PSII is composed of 1 copy each of membrane proteins PsbA, PsbB, PsbC, PsbD, PsbE, PsbF, PsbH, PsbI, PsbJ, PsbK, PsbL, PsbM, PsbT, PsbX, PsbY, PsbZ, Psb30/Ycf12, at least 3 peripheral proteins of the oxygen-evolving complex and a large number of cofactors. It forms dimeric complexes.

Its subcellular location is the plastid. It localises to the chloroplast thylakoid membrane. One of the components of the core complex of photosystem II (PSII). PSII is a light-driven water:plastoquinone oxidoreductase that uses light energy to abstract electrons from H(2)O, generating O(2) and a proton gradient subsequently used for ATP formation. It consists of a core antenna complex that captures photons, and an electron transfer chain that converts photonic excitation into a charge separation. This is Photosystem II reaction center protein K from Phalaenopsis aphrodite subsp. formosana (Moth orchid).